The chain runs to 71 residues: Plasticin-C1 (71 aa).

A signal peptide spans 1–22; it reads MAFLKKSLLLVLFLGLVSLSIC. Positions 23 to 45 are excised as a propeptide; sequence EEEKRENEDEEKQEDDDQSENKR. Residues 25–46 are disordered; that stretch reads EKRENEDEEKQEDDDQSENKRG. The segment covering 30–40 has biased composition (acidic residues); it reads EDEEKQEDDDQ. Asparagine 68 carries the asparagine amide modification. The propeptide occupies 70-71; sequence ES.

It belongs to the frog skin active peptide (FSAP) family. Plasticin subfamily. In terms of tissue distribution, expressed by the skin glands.

Its subcellular location is the secreted. It localises to the target cell membrane. Neutral peptide with no antimicrobial activity. May act in synergy with cationic peptides by enhancing their activity. Has a moderate hemolytic activity. This is Plasticin-C1 from Agalychnis callidryas (Red-eyed tree frog).